We begin with the raw amino-acid sequence, 185 residues long: Ribosome-recycling factor (185 aa).

The protein belongs to the RRF family.

It is found in the cytoplasm. In terms of biological role, responsible for the release of ribosomes from messenger RNA at the termination of protein biosynthesis. May increase the efficiency of translation by recycling ribosomes from one round of translation to another. This chain is Ribosome-recycling factor, found in Pelobacter propionicus (strain DSM 2379 / NBRC 103807 / OttBd1).